A 254-amino-acid polypeptide reads, in one-letter code: Leucyl/phenylalanyl-tRNA--protein transferase (254 aa).

Belongs to the L/F-transferase family.

Its subcellular location is the cytoplasm. It catalyses the reaction N-terminal L-lysyl-[protein] + L-leucyl-tRNA(Leu) = N-terminal L-leucyl-L-lysyl-[protein] + tRNA(Leu) + H(+). The catalysed reaction is N-terminal L-arginyl-[protein] + L-leucyl-tRNA(Leu) = N-terminal L-leucyl-L-arginyl-[protein] + tRNA(Leu) + H(+). The enzyme catalyses L-phenylalanyl-tRNA(Phe) + an N-terminal L-alpha-aminoacyl-[protein] = an N-terminal L-phenylalanyl-L-alpha-aminoacyl-[protein] + tRNA(Phe). Functions in the N-end rule pathway of protein degradation where it conjugates Leu, Phe and, less efficiently, Met from aminoacyl-tRNAs to the N-termini of proteins containing an N-terminal arginine or lysine. This Bordetella bronchiseptica (strain ATCC BAA-588 / NCTC 13252 / RB50) (Alcaligenes bronchisepticus) protein is Leucyl/phenylalanyl-tRNA--protein transferase.